Here is a 212-residue protein sequence, read N- to C-terminus: Mediator of RNA polymerase II transcription subunit 20 (212 aa).

It belongs to the Mediator complex subunit 20 family. In terms of assembly, component of the Mediator complex, which is composed of MED1, MED4, MED6, MED7, MED8, MED9, MED10, MED11, MED12, MED13, MED13L, MED14, MED15, MED16, MED17, MED18, MED19, MED20, MED21, MED22, MED23, MED24, MED25, MED26, MED27, MED29, MED30, MED31, CCNC, CDK8 and CDC2L6/CDK11. The MED12, MED13, CCNC and CDK8 subunits form a distinct module termed the CDK8 module. Mediator containing the CDK8 module is less active than Mediator lacking this module in supporting transcriptional activation. Individual preparations of the Mediator complex lacking one or more distinct subunits have been variously termed ARC, CRSP, DRIP, PC2, SMCC and TRAP. Interacts with PPARG.

It localises to the nucleus. Component of the Mediator complex, a coactivator involved in the regulated transcription of nearly all RNA polymerase II-dependent genes. Mediator functions as a bridge to convey information from gene-specific regulatory proteins to the basal RNA polymerase II transcription machinery. Mediator is recruited to promoters by direct interactions with regulatory proteins and serves as a scaffold for the assembly of a functional preinitiation complex with RNA polymerase II and the general transcription factors. This Macaca fascicularis (Crab-eating macaque) protein is Mediator of RNA polymerase II transcription subunit 20 (MED20).